A 462-amino-acid chain; its full sequence is Glutamate--tRNA ligase 1 (462 aa).

A 'HIGH' region motif is present at residues 8–18; it reads PSPTGYLHIGG. Positions 237 to 241 match the 'KMSKS' region motif; it reads KLSKR. Lysine 240 is a binding site for ATP.

The protein belongs to the class-I aminoacyl-tRNA synthetase family. Glutamate--tRNA ligase type 1 subfamily. As to quaternary structure, monomer.

The protein localises to the cytoplasm. It carries out the reaction tRNA(Glu) + L-glutamate + ATP = L-glutamyl-tRNA(Glu) + AMP + diphosphate. In terms of biological role, catalyzes the attachment of glutamate to tRNA(Glu) in a two-step reaction: glutamate is first activated by ATP to form Glu-AMP and then transferred to the acceptor end of tRNA(Glu). In Campylobacter hominis (strain ATCC BAA-381 / DSM 21671 / CCUG 45161 / LMG 19568 / NCTC 13146 / CH001A), this protein is Glutamate--tRNA ligase 1.